Here is a 345-residue protein sequence, read N- to C-terminus: Carbamoyl phosphate synthase small chain (345 aa).

The tract at residues 1 to 169 (MKKYLVMEDG…FVKGEEGGTV (169 aa)) is CPSase. L-glutamine is bound by residues Ser45, Gly213, and Gly215. In terms of domain architecture, Glutamine amidotransferase type-1 spans 168–345 (TVLFIDLGSK…GEMKRRIGYA (178 aa)). The active-site Nucleophile is the Cys242. L-glutamine contacts are provided by Phe243, Gln246, Asn282, Gly284, and Tyr285. Catalysis depends on residues His321 and Glu323.

This sequence belongs to the CarA family. As to quaternary structure, composed of two chains; the small (or glutamine) chain promotes the hydrolysis of glutamine to ammonia, which is used by the large (or ammonia) chain to synthesize carbamoyl phosphate. Tetramer of heterodimers (alpha,beta)4.

The catalysed reaction is hydrogencarbonate + L-glutamine + 2 ATP + H2O = carbamoyl phosphate + L-glutamate + 2 ADP + phosphate + 2 H(+). It catalyses the reaction L-glutamine + H2O = L-glutamate + NH4(+). It functions in the pathway amino-acid biosynthesis; L-arginine biosynthesis; carbamoyl phosphate from bicarbonate: step 1/1. The protein operates within pyrimidine metabolism; UMP biosynthesis via de novo pathway; (S)-dihydroorotate from bicarbonate: step 1/3. Small subunit of the glutamine-dependent carbamoyl phosphate synthetase (CPSase). CPSase catalyzes the formation of carbamoyl phosphate from the ammonia moiety of glutamine, carbonate, and phosphate donated by ATP, constituting the first step of 2 biosynthetic pathways, one leading to arginine and/or urea and the other to pyrimidine nucleotides. The small subunit (glutamine amidotransferase) binds and cleaves glutamine to supply the large subunit with the substrate ammonia. This is Carbamoyl phosphate synthase small chain from Thermoplasma volcanium (strain ATCC 51530 / DSM 4299 / JCM 9571 / NBRC 15438 / GSS1).